Reading from the N-terminus, the 113-residue chain is UPF0482 protein KPN78578_15540 (113 aa).

Positions 1–28 are cleaved as a signal peptide; the sequence is MNMTLNKRWCLTAILALSAVVYTSSSYA. The disordered stretch occupies residues 38-60; that stretch reads GDSAQSRQQASMEKEQWNDTRSL. The span at 39–48 shows a compositional bias: polar residues; it reads DSAQSRQQAS. Positions 49–59 are enriched in basic and acidic residues; that stretch reads MEKEQWNDTRS.

This sequence belongs to the UPF0482 family.

This chain is UPF0482 protein KPN78578_15540, found in Klebsiella pneumoniae subsp. pneumoniae (strain ATCC 700721 / MGH 78578).